We begin with the raw amino-acid sequence, 85 residues long: Cell division topological specificity factor (85 aa).

The protein belongs to the MinE family.

In terms of biological role, prevents the cell division inhibition by proteins MinC and MinD at internal division sites while permitting inhibition at polar sites. This ensures cell division at the proper site by restricting the formation of a division septum at the midpoint of the long axis of the cell. In Shewanella amazonensis (strain ATCC BAA-1098 / SB2B), this protein is Cell division topological specificity factor.